We begin with the raw amino-acid sequence, 169 residues long: Cytochrome c-type biogenesis protein CcmE (169 aa).

The Cytoplasmic portion of the chain corresponds to 1–7 (MTRKQRR). Residues 8–28 (MTIIGGSLAVLALAAALVLNA) form a helical; Signal-anchor for type II membrane protein membrane-spanning segment. Topologically, residues 29 to 169 (LRDSIVFFST…AQGNPQGAVR (141 aa)) are periplasmic. His122 and Tyr126 together coordinate heme. A disordered region spans residues 143 to 169 (DDYGGKASDGVKPAATTAQGNPQGAVR). Residues 158–169 (TTAQGNPQGAVR) are compositionally biased toward polar residues.

The protein belongs to the CcmE/CycJ family.

The protein localises to the cell inner membrane. In terms of biological role, heme chaperone required for the biogenesis of c-type cytochromes. Transiently binds heme delivered by CcmC and transfers the heme to apo-cytochromes in a process facilitated by CcmF and CcmH. This chain is Cytochrome c-type biogenesis protein CcmE, found in Bradyrhizobium diazoefficiens (strain JCM 10833 / BCRC 13528 / IAM 13628 / NBRC 14792 / USDA 110).